Here is a 268-residue protein sequence, read N- to C-terminus: M1-specific T cell receptor alpha chain (268 aa).

Positions 1–19 (MVLKFSVSILWIQLAWVST) are cleaved as a signal peptide. An Ig-like V-type domain is found at 20 to 107 (QLLEQSPQFL…QPGDTGLYLC (88 aa)). The tract at residues 20–109 (QLLEQSPQFL…GDTGLYLCAG (90 aa)) is t cell receptor alpha variable 27. N36 and N42 each carry an N-linked (GlcNAc...) asparagine glycan. A disulfide bond links C41 and C107. The tract at residues 45–49 (SVFSS) is CDR1. Residues 67 to 69 (VVT) are CDR2. The segment at 107-118 (CAGGGSQGNLIF) is CDR3. The tract at residues 110–128 (GGSQGNLIFGKGTKLSVKP) is t cell receptor alpha joining 42. A t cell receptor alpha constant region spans residues 129–268 (IQNPDPAVYQ…LLMTLRLWSS (140 aa)). Positions 147 to 235 (KSVCLFTDFD…LVEKSFETDT (89 aa)) constitute an Ig-like C1-type domain. A disulfide bond links C150 and C200. N-linked (GlcNAc...) asparagine glycans are attached at residues N160, N194, N205, and N241. The segment at 222-243 (CDVKLVEKSFETDTNLNFQNLS) is connecting peptide. A helical membrane pass occupies residues 244–266 (VIGFRILLLKVAGFNLLMTLRLW). At 267–268 (SS) the chain is on the cytoplasmic side.

Disulfide-linked heterodimer with TRBV19*01J2S7*01C*02 beta chain. The TR primarily interacts via its CDR3-beta domain with M/matrix protein 1-derived peptide (GILGFVFTL) displayed by HLA-A*02.01 in a 'peg-notch' recognition mode. The alpha-beta TR associates with the transmembrane signaling CD3 coreceptor proteins to form the TR-CD3 (TCR). The assembly of alpha-beta TR heterodimers with CD3 occurs in the endoplasmic reticulum where a single alpha-beta TR heterodimer associates with one CD3D-CD3E heterodimer, one CD3G-CD3E heterodimer and one CD247 homodimer forming a stable octameric structure. CD3D-CD3E and CD3G-CD3E heterodimers preferentially associate with TR alpha and TR beta chains (via TM domain), respectively. The association of the CD247 homodimer is the last step of TCR assembly in the endoplasmic reticulum and is required for transport to the cell surface. As to expression, expressed in M/matrix protein 1-specific effector and memory CD8-positive T cells readily detectable in the peripheral blood, secondary lymphoid organs and lung (primary site of infection) of IAV infected individuals.

The protein localises to the cell membrane. In terms of biological role, the alpha chain of TRAV27*01J42*01C*01/TRBV19*01J2S7*01C*02 alpha-beta T cell receptor (TR) clonotype that is specific for HLA-A*02:01-restricted M/matrix protein 1 immunodominant epitope GILGFVFTL of influenza A virus (IAV). Classified as a public TR clonotype, it is preferentially selected in effector memory CD8-positive T cells among multiple HLA-A*02:01 carriers and confers long-lived immunity against IAV infection. Can cross-recognize sporadically emerging IAV variants by molecular mimicry, inducing immunity toward different influenza strains. Antigen recognition initiates TR-CD3 clustering on the cell surface and intracellular activation of LCK that phosphorylates the ITAM motifs of CD3G, CD3D, CD3E and CD247 enabling the recruitment of ZAP70. In turn, ZAP70 phosphorylates LAT, which recruits numerous signaling molecules to form the LAT signalosome. The LAT signalosome propagates signal branching to three major signaling pathways, the calcium, the mitogen-activated protein kinase (MAPK) kinase and the nuclear factor NF-kappa-B (NF-kB) pathways, leading to the mobilization of transcription factors that are critical for gene expression and essential for T cell differentiation into effector/memory T cells. The polypeptide is M1-specific T cell receptor alpha chain (Homo sapiens (Human)).